Consider the following 155-residue polypeptide: MNPRRKKRLLITSLLAVALSLAVGLVLFALQQNIDLFYTPTEIIEGKKETGIKPEVGQRLRIGGMVVQGSVKRNPESLKVSFDLVDNGGGIVTVFFDGILPDLFREGQGIVAQGNLLNATEINASEVLAKHDEEYMPPEVSEALVGMDNFKANNK.

At 1–8 (MNPRRKKR) the chain is on the cytoplasmic side. A helical; Signal-anchor for type II membrane protein transmembrane segment spans residues 9–29 (LLITSLLAVALSLAVGLVLFA). At 30–155 (LQQNIDLFYT…GMDNFKANNK (126 aa)) the chain is on the periplasmic side. Heme contacts are provided by His-131 and Tyr-135.

Belongs to the CcmE/CycJ family.

It localises to the cell inner membrane. In terms of biological role, heme chaperone required for the biogenesis of c-type cytochromes. Transiently binds heme delivered by CcmC and transfers the heme to apo-cytochromes in a process facilitated by CcmF and CcmH. This Psychromonas ingrahamii (strain DSM 17664 / CCUG 51855 / 37) protein is Cytochrome c-type biogenesis protein CcmE.